We begin with the raw amino-acid sequence, 210 residues long: Cell division protein SepF (210 aa).

The tract at residues G13–M78 is disordered. The span at Y22–D31 shows a compositional bias: acidic residues. Residues R47–M60 show a composition bias toward basic and acidic residues. Polar residues predominate over residues V64–M78.

This sequence belongs to the SepF family. In terms of assembly, homodimer. Interacts with FtsZ.

The protein localises to the cytoplasm. Functionally, cell division protein that is part of the divisome complex and is recruited early to the Z-ring. Probably stimulates Z-ring formation, perhaps through the cross-linking of FtsZ protofilaments. Its function overlaps with FtsA. This chain is Cell division protein SepF, found in Cyanothece sp. (strain PCC 7425 / ATCC 29141).